Here is a 211-residue protein sequence, read N- to C-terminus: Protein-L-isoaspartate O-methyltransferase (211 aa).

Residue Ser-62 is part of the active site.

It belongs to the methyltransferase superfamily. L-isoaspartyl/D-aspartyl protein methyltransferase family.

The protein localises to the cytoplasm. It catalyses the reaction [protein]-L-isoaspartate + S-adenosyl-L-methionine = [protein]-L-isoaspartate alpha-methyl ester + S-adenosyl-L-homocysteine. Functionally, catalyzes the methyl esterification of L-isoaspartyl residues in peptides and proteins that result from spontaneous decomposition of normal L-aspartyl and L-asparaginyl residues. It plays a role in the repair and/or degradation of damaged proteins. This is Protein-L-isoaspartate O-methyltransferase from Shewanella oneidensis (strain ATCC 700550 / JCM 31522 / CIP 106686 / LMG 19005 / NCIMB 14063 / MR-1).